The chain runs to 153 residues: 6,7-dimethyl-8-ribityllumazine synthase 1 (153 aa).

5-amino-6-(D-ribitylamino)uracil-binding positions include F16, 50-52, and 74-76; these read AYE and CVI. A (2S)-2-hydroxy-3-oxobutyl phosphate-binding site is contributed by 79-80; it reads ET. H82 functions as the Proton donor in the catalytic mechanism. F107 contacts 5-amino-6-(D-ribitylamino)uracil. Position 121 (R121) interacts with (2S)-2-hydroxy-3-oxobutyl phosphate.

It belongs to the DMRL synthase family.

The enzyme catalyses (2S)-2-hydroxy-3-oxobutyl phosphate + 5-amino-6-(D-ribitylamino)uracil = 6,7-dimethyl-8-(1-D-ribityl)lumazine + phosphate + 2 H2O + H(+). Its pathway is cofactor biosynthesis; riboflavin biosynthesis; riboflavin from 2-hydroxy-3-oxobutyl phosphate and 5-amino-6-(D-ribitylamino)uracil: step 1/2. Catalyzes the formation of 6,7-dimethyl-8-ribityllumazine by condensation of 5-amino-6-(D-ribitylamino)uracil with 3,4-dihydroxy-2-butanone 4-phosphate. This is the penultimate step in the biosynthesis of riboflavin. The sequence is that of 6,7-dimethyl-8-ribityllumazine synthase 1 from Caulobacter vibrioides (strain ATCC 19089 / CIP 103742 / CB 15) (Caulobacter crescentus).